A 232-amino-acid polypeptide reads, in one-letter code: Large ribosomal subunit protein uL1 (232 aa).

This sequence belongs to the universal ribosomal protein uL1 family. As to quaternary structure, part of the 50S ribosomal subunit.

Its function is as follows. Binds directly to 23S rRNA. The L1 stalk is quite mobile in the ribosome, and is involved in E site tRNA release. In terms of biological role, protein L1 is also a translational repressor protein, it controls the translation of the L11 operon by binding to its mRNA. The chain is Large ribosomal subunit protein uL1 from Coxiella burnetii (strain CbuK_Q154) (Coxiella burnetii (strain Q154)).